A 1416-amino-acid polypeptide reads, in one-letter code: DNA-directed RNA polymerase subunit beta' (1416 aa).

Zn(2+)-binding residues include Cys-71, Cys-73, Cys-86, and Cys-89. Residues Asp-461, Asp-463, and Asp-465 each contribute to the Mg(2+) site. Zn(2+) contacts are provided by Cys-815, Cys-889, Cys-896, and Cys-899.

Belongs to the RNA polymerase beta' chain family. As to quaternary structure, the RNAP catalytic core consists of 2 alpha, 1 beta, 1 beta' and 1 omega subunit. When a sigma factor is associated with the core the holoenzyme is formed, which can initiate transcription. It depends on Mg(2+) as a cofactor. Requires Zn(2+) as cofactor.

It carries out the reaction RNA(n) + a ribonucleoside 5'-triphosphate = RNA(n+1) + diphosphate. DNA-dependent RNA polymerase catalyzes the transcription of DNA into RNA using the four ribonucleoside triphosphates as substrates. The protein is DNA-directed RNA polymerase subunit beta' of Haemophilus influenzae (strain 86-028NP).